The primary structure comprises 230 residues: Ureidoacrylate amidohydrolase RutB (230 aa).

Catalysis depends on aspartate 24, which acts as the Proton acceptor. Lysine 133 is an active-site residue. Catalysis depends on cysteine 166, which acts as the Nucleophile.

Belongs to the isochorismatase family. RutB subfamily.

It carries out the reaction (Z)-3-ureidoacrylate + H2O + H(+) = (Z)-3-aminoacrylate + NH4(+) + CO2. The catalysed reaction is (Z)-3-ureidoacrylate + H2O = (Z)-3-aminoacrylate + carbamate + H(+). It catalyses the reaction (Z)-2-methylureidoacrylate + H2O + H(+) = (Z)-2-methylaminoacrylate + NH4(+) + CO2. In terms of biological role, hydrolyzes ureidoacrylate to form aminoacrylate and carbamate. The carbamate hydrolyzes spontaneously, thereby releasing one of the nitrogen atoms of the pyrimidine ring as ammonia and one of its carbon atoms as CO2. The chain is Ureidoacrylate amidohydrolase RutB from Escherichia coli O111:H- (strain 11128 / EHEC).